We begin with the raw amino-acid sequence, 509 residues long: Lysine--tRNA ligase (509 aa).

E418 and E425 together coordinate Mg(2+).

Belongs to the class-II aminoacyl-tRNA synthetase family. As to quaternary structure, homodimer. The cofactor is Mg(2+).

The protein resides in the cytoplasm. The catalysed reaction is tRNA(Lys) + L-lysine + ATP = L-lysyl-tRNA(Lys) + AMP + diphosphate. This chain is Lysine--tRNA ligase, found in Acinetobacter baumannii (strain ATCC 17978 / DSM 105126 / CIP 53.77 / LMG 1025 / NCDC KC755 / 5377).